The chain runs to 206 residues: Small ribosomal subunit protein uS7 (206 aa).

It belongs to the universal ribosomal protein uS7 family. Component of the small ribosomal subunit.

Its subcellular location is the cytoplasm. Component of the small ribosomal subunit. The ribosome is a large ribonucleoprotein complex responsible for the synthesis of proteins in the cell. The sequence is that of Small ribosomal subunit protein uS7 from Entamoeba histolytica (strain ATCC 30459 / HM-1:IMSS / ABRM).